The sequence spans 281 residues: Proteasome subunit beta (281 aa).

The propeptide at 1–53 (MEANTRSTGRLPAAFLTPGSSSFMDFLGEHQPEMLPGNRQLPPVQGVIEAPHG) is removed in mature form; by autocatalysis. Threonine 54 (nucleophile) is an active-site residue.

Belongs to the peptidase T1B family. In terms of assembly, the 20S proteasome core is composed of 14 alpha and 14 beta subunits that assemble into four stacked heptameric rings, resulting in a barrel-shaped structure. The two inner rings, each composed of seven catalytic beta subunits, are sandwiched by two outer rings, each composed of seven alpha subunits. The catalytic chamber with the active sites is on the inside of the barrel. Has probably a gated structure, the ends of the cylinder being occluded by the N-termini of the alpha-subunits. Is likely capped by the proteasome-associated ATPase, ARC.

It is found in the cytoplasm. The enzyme catalyses Cleavage of peptide bonds with very broad specificity.. Its pathway is protein degradation; proteasomal Pup-dependent pathway. The formation of the proteasomal ATPase ARC-20S proteasome complex, likely via the docking of the C-termini of ARC into the intersubunit pockets in the alpha-rings, may trigger opening of the gate for substrate entry. Interconversion between the open-gate and close-gate conformations leads to a dynamic regulation of the 20S proteasome proteolysis activity. Peptidolytic activity is completely inhibited by lactacystin, and to a lesser extent, by N-acetyl-Leu-Leu-norleucinal (Ac-LLnL) and benzoyloxycarbonyl-Leu-Leu-Leu-vinylsulfone (Z-LLL-VS) in vitro. In terms of biological role, component of the proteasome core, a large protease complex with broad specificity involved in protein degradation. The S.coelicolor proteasome is able to cleave oligopeptides after hydrophobic residues, but not after basic or acidic residues, thus displaying chymotrypsin-like activity but not trypsin-like activity. This is Proteasome subunit beta from Streptomyces coelicolor (strain ATCC BAA-471 / A3(2) / M145).